Reading from the N-terminus, the 352-residue chain is D-arabitol-phosphate dehydrogenase (352 aa).

Mn(2+)-binding residues include Cys-43, His-65, Cys-96, Cys-99, Cys-102, Cys-110, and Glu-151.

This sequence belongs to the zinc-containing alcohol dehydrogenase family. Homotetramer. Mn(2+) is required as a cofactor.

It catalyses the reaction D-arabinitol 1-phosphate + NAD(+) = D-xylulose 5-phosphate + NADH + H(+). Inhibited by EDTA, 4-hydroxymercuribenzoic acid (PHMB), mercury and zinc ions at a concentration of 2 mM. Its function is as follows. Involved in the arabitol catabolism via the arabitol phosphate route. Catalyzes only the transformation of D-arabitol 1-phosphate (Arb1P) and D-arabitol 5-phosphate (Arb5P) into D-xylulose 5-phosphate (Xlu5P) and ribulose 5-phosphate, respectively. It can use both NAD and NADP. The chain is D-arabitol-phosphate dehydrogenase from Enterococcus avium (Streptococcus avium).